Reading from the N-terminus, the 214-residue chain is MFASRAIRMMSMRPMARTMATKAAAPVKVPVQLFGLDGTYATALYTAAAKESDLSKTEGSLAKLRDVFAQQPEVAQIVSNPTLSHEDKQTVVNVLSQAVGGDKTLTNFLTVISDNNRLALIPGIIEKFETLVNASKGLVEATVTSASELDKKTVNRIQAAIAGSSFVGEGELKLNLKVNPDILGGLIVEVAERTVDVSVASKIARLNHVLSEPI.

The transit peptide at 1-24 directs the protein to the mitochondrion; the sequence is MFASRAIRMMSMRPMARTMATKAA.

As to quaternary structure, F-type ATP synthases have 2 components, the catalytic core F(1) and the membrane-embedded component F(0), linked together by a central stalk and a peripheral stalk. The central stalk, also called rotor shaft, is often seen as part of F(1). The peripheral stalk is seen as part of F(0). F(0) contains the membrane channel next to the rotor. F-type ATP synthases form dimers but each monomer functions independently in ATP generation. The dimer consists of 17 different polypeptides: ATP1 (subunit alpha, 3 molecules per monomer, part of F(1)), ATP2 (subunit beta, 3 copies per monomer, part of F(1)), ATP3 (subunit gamma, part of the central stalk), ATP4 (subunit b, part of the peripheral stalk), ATP5/OSCP (subunit 5/OSCP, part of the peripheral stalk), ATP6 (subunit a, part of the peripheral stalk), ATP7 (subunit d, part of the peripheral stalk), ATP8 (subunit 8, part of the peripheral stalk), OLI1 (subunit c, part of the rotor, 10 molecules per monomer), ATP14 (subunit h, part of the peripheral stalk), ATP15 (subunit epsilon, part of the central stalk), ATP16 (subunit delta, part of the central stalk), ATP17 (subunit f, part of the peripheral stalk), ATP18 (subunit i/j, part of the peripheral stalk), ATP19 (subunit k, dimer-specific, at interface between monomers), ATP20 (subunit g, at interface between monomers), TIM11 (subunit e, at interface between monomers).

The protein localises to the mitochondrion inner membrane. In terms of biological role, mitochondrial membrane ATP synthase (F(1)F(0) ATP synthase or Complex V) produces ATP from ADP in the presence of a proton gradient across the membrane which is generated by electron transport complexes of the respiratory chain. F-type ATP synthases consist of two structural domains, F(1) - containing the extramembraneous catalytic core, and F(0) - containing the membrane proton channel, linked together by a central stalk and a peripheral stalk. During catalysis, ATP synthesis in the catalytic domain of F(1) is coupled via a rotary mechanism of the central stalk subunits to proton translocation. Part of the complex F(0) domain and the peripheral stalk, which acts as a stator to hold the catalytic alpha/ATP1(3)beta/ATP2(3) subcomplex and subunit a/ATP6 static relative to the rotary elements. The chain is ATP synthase subunit 5, mitochondrial from Yarrowia lipolytica (strain CLIB 122 / E 150) (Yeast).